The chain runs to 605 residues: Elongation factor 4 (605 aa).

Residues 4-181 (NKIKTFSIIA…AIVEYVPSPL (178 aa)) enclose the tr-type G domain. GTP-binding positions include 16–21 (DHGKST) and 128–131 (NKVD).

It belongs to the TRAFAC class translation factor GTPase superfamily. Classic translation factor GTPase family. LepA subfamily.

Its subcellular location is the cell membrane. The catalysed reaction is GTP + H2O = GDP + phosphate + H(+). Required for accurate and efficient protein synthesis under certain stress conditions. May act as a fidelity factor of the translation reaction, by catalyzing a one-codon backward translocation of tRNAs on improperly translocated ribosomes. Back-translocation proceeds from a post-translocation (POST) complex to a pre-translocation (PRE) complex, thus giving elongation factor G a second chance to translocate the tRNAs correctly. Binds to ribosomes in a GTP-dependent manner. This is Elongation factor 4 from Mycoplasmopsis synoviae (strain 53) (Mycoplasma synoviae).